Here is a 283-residue protein sequence, read N- to C-terminus: 4-diphosphocytidyl-2-C-methyl-D-erythritol kinase (283 aa).

Lys-12 is an active-site residue. An ATP-binding site is contributed by 94–104 (PAQAGLGGGSS). Asp-136 is an active-site residue.

This sequence belongs to the GHMP kinase family. IspE subfamily.

It catalyses the reaction 4-CDP-2-C-methyl-D-erythritol + ATP = 4-CDP-2-C-methyl-D-erythritol 2-phosphate + ADP + H(+). It functions in the pathway isoprenoid biosynthesis; isopentenyl diphosphate biosynthesis via DXP pathway; isopentenyl diphosphate from 1-deoxy-D-xylulose 5-phosphate: step 3/6. In terms of biological role, catalyzes the phosphorylation of the position 2 hydroxy group of 4-diphosphocytidyl-2C-methyl-D-erythritol. This chain is 4-diphosphocytidyl-2-C-methyl-D-erythritol kinase, found in Acidovorax ebreus (strain TPSY) (Diaphorobacter sp. (strain TPSY)).